Reading from the N-terminus, the 147-residue chain is Hemoglobin anodic subunit beta (147 aa).

Positions 2-147 (EWTEDERTAI…VTSALARQYH (146 aa)) constitute a Globin domain. Heme b contacts are provided by histidine 63 and histidine 92.

Belongs to the globin family. Heterotetramer of two alpha chains and two beta chains. Red blood cells.

Functionally, involved in oxygen transport from gills to the various peripheral tissues. The sequence is that of Hemoglobin anodic subunit beta (hbb1) from Anguilla anguilla (European freshwater eel).